Here is a 1684-residue protein sequence, read N- to C-terminus: MGAGSSTEQRSPEQPAESDTPSELELSGHGPAAEASGAAGDPADADPATKLPQKNGQLSAVNGVAEQEDVHVQEESQDGQEEEVTVEDVGQRESEDVKEKDRAKEMAASSTVVEDITKDEQEETPEIIEQIPASESNVEEMAQAAESQANDVGFKKVFKFVGFKFTVKKDKNEKSDTVQLLTVKKDEGEGAEASVGAGDHQEPGVETVGESASKESELKQSTEKQEGTLKQAQSSTEIPLQAESGQGTEEEAAKDGEENREKEPTKPLESPTSPVSNETTSSFKKFFTHGWAGWRKKTSFKKPKEDDLETSEKRKEQEAEKVDEEEGEKTEPAPAEEQEPAEGTDQARLSADYEKVELPLEDQVGDLEALSEKCAPLATEVFDEKTEAHQEVVAEVHVSTVEKMTKGQGGAEVEGDVVVEGSGESLPPEKLAETQEVPQEAEPVEELMKTKEVCVSGGDHTQLTDLSPEEKMLPKHPEGIVSEVEMLSSQERIKVQGSPLKKLFSSSGLKKLSGKKQKGKRGGGGGDEEPGEYQHIQTESPESADEQKGESSASSPEEPEEIACLEKGPSEAPQEAEAEEGATSDGEKKREGITPWASFKKMVTPKKRVRRPSESDKEEELDKVKSATLSSTESTASGMQDEVRAVGEEQRSEEPKRRVDTSVSWEALICVGSSKKRARKASSSDDEGGPRTLGGDGHRAEEASKDKEADALPASTQEQDQAHGSSSPEPAGSPSEGEGVSTWESFKRLVTPRKKSKSKLEERAEDSGAEQLASEIEPSREESWVSIKKFIPGRRKKRADGKQEQAAVEDSGPGEINEDDPDVPAVVPLSEYDAVEREKLEAQRAQENVELPQLKGAVYVSEELSKTLVHTVSVAVIDGTRAVTSAEERSPSWISASMTEPLEHAEGVATPPVGEVTEKDITAEATPALAQTLPGGKDAHDDIVTSEVDFTSEAVTAAETTEALRAEELTEASGAEETTDMVSAVSQLSDSPDTTEEATPVQEVEGGMLDTEEQERQTQAVLQAVADKVKEDSQVPATQTLQRAGPKALEKVEEVEEDSEVLATEKEKDVVPEGPVQEAETEHLAQGSETVQATPESLEVPEVTEDVDRATTCQVIKHQQLMEQAVAPESSETLTDSETNGSTPLADSDTPNGTQQDETVDSQDSNAIAAVKQSQVTEEEAAAAQTEGPSTPSSFPAQEEHREKPGRDVLEPTQALAAGAVPILAKAEVGQEGEAGQFDGEKVKDGQCVKELEVPVHTGPNSQKTADLTRDSEVMEVARCQETESNEEQSISPEKREMGTDVEKEETETKTEQASEEHEQETAAPEHEGTHPKPVLTADMPHSERGKALGSLEGSPSLPDQDKADCIEVQVQSSDTPVTQTTEAVKKVEETVATSEMDESLECAGAQSLPAEKLSETGGYGTLQHGEDTVPQGPESQAESIPIIVTPAPESILHSDLQREVSASQKQRSDEDNKPDAGPDAAGKESAAREKILRAEPEILELESKSNKIVQSVIQTAVDQFARTETAPETHASDLQNQVPVMQADSQGAQQMLDKDESDLQVSPQDGTLSAVAQEGLAVSDSSEGMSKASEMITTLAVESASVKESVEKLPLQCKDEKEHAADGPQHQSLAKAEADASGNLTKESPDTNGPKLTEEGDALKEEMNKAQTEEDDLQEPKGDLTES.

Positions 1-124 (MGAGSSTEQR…DITKDEQEET (124 aa)) are disordered. Residue Gly-2 is the site of N-myristoyl glycine attachment. A phosphoserine mark is found at Ser-11, Ser-18, Ser-22, and Ser-27. Residues 30–48 (GPAAEASGAAGDPADADPA) show a composition bias toward low complexity. Positions 75 to 86 (ESQDGQEEEVTV) are enriched in acidic residues. Over residues 89-105 (VGQRESEDVKEKDRAKE) the composition is skewed to basic and acidic residues. The residue at position 136 (Ser-136) is a Phosphoserine. Disordered regions lie at residues 175-281 (SDTV…ETTS) and 296-353 (KKTS…SADY). A compositionally biased stretch (basic and acidic residues) spans 212-227 (ASKESELKQSTEKQEG). The span at 228–247 (TLKQAQSSTEIPLQAESGQG) shows a compositional bias: polar residues. Phosphoserine is present on residues Ser-234 and Ser-244. Residues 251-266 (EAAKDGEENREKEPTK) are compositionally biased toward basic and acidic residues. The tract at residues 253–543 (AKDGEENREK…QHIQTESPES (291 aa)) is involved in PKC-binding. Phosphoserine occurs at positions 270 and 273. Residues 270-281 (SPTSPVSNETTS) are compositionally biased toward polar residues. Positions 302-320 (KPKEDDLETSEKRKEQEAE) are enriched in basic and acidic residues. A compositionally biased stretch (acidic residues) spans 321 to 342 (KVDEEEGEKTEPAPAEEQEPAE). The residue at position 330 (Thr-330) is a Phosphothreonine. The residue at position 350 (Ser-350) is a Phosphoserine. Tyr-353 carries the phosphotyrosine modification. Phosphoserine is present on residues Ser-371 and Ser-467. Residues 421–479 (GSGESLPPEKLAETQEVPQEAEPVEELMKTKEVCVSGGDHTQLTDLSPEEKMLPKHPEG) form a disordered region. Basic and acidic residues predominate over residues 468–478 (PEEKMLPKHPE). Residues Ser-489, Ser-505, and Ser-507 each carry the phosphoserine modification. The tract at residues 492–825 (RIKVQGSPLK…INEDDPDVPA (334 aa)) is disordered. The segment covering 497 to 511 (GSPLKKLFSSSGLKK) has biased composition (low complexity). Residues 512–521 (LSGKKQKGKR) show a composition bias toward basic residues. Phosphoserine occurs at positions 540, 543, 584, 598, 613, and 615. Residues 593–613 (ITPWASFKKMVTPKKRVRRPS) carry the AKAP CaM-binding 1 motif. Positions 611–625 (RPSESDKEEELDKVK) are enriched in basic and acidic residues. The span at 626-637 (SATLSSTESTAS) shows a compositional bias: low complexity. A Phosphothreonine modification is found at Thr-628. Ser-630, Ser-631, Ser-634, and Ser-637 each carry phosphoserine. A compositionally biased stretch (basic and acidic residues) spans 641 to 660 (DEVRAVGEEQRSEEPKRRVD). 3 positions are modified to phosphoserine: Ser-682, Ser-683, and Ser-684. Positions 696–710 (DGHRAEEASKDKEAD) are enriched in basic and acidic residues. Residues 714-723 (ASTQEQDQAH) are compositionally biased toward polar residues. Residues 724–741 (GSSSPEPAGSPSEGEGVS) are compositionally biased toward low complexity. Ser-733, Ser-745, Ser-767, and Ser-786 each carry phosphoserine. The AKAP CaM-binding 2 motif lies at 740–760 (VSTWESFKRLVTPRKKSKSKL). The AKAP CaM-binding 3 signature appears at 781 to 801 (EESWVSIKKFIPGRRKKRADG). Thr-871 bears the Phosphothreonine mark. A Phosphoserine modification is found at Ser-873. Positions 970–1001 (TEASGAEETTDMVSAVSQLSDSPDTTEEATPV) are disordered. Positions 980–992 (DMVSAVSQLSDSP) are enriched in polar residues. Lys-1030 is covalently cross-linked (Glycyl lysine isopeptide (Lys-Gly) (interchain with G-Cter in SUMO1)). 4 disordered regions span residues 1055 to 1106 (VEED…VTED), 1121 to 1211 (LMEQ…DVLE), 1232 to 1365 (EGEA…DKAD), and 1391 to 1492 (TVAT…REKI). A Phosphoserine modification is found at Ser-1059. The segment covering 1130 to 1176 (SSETLTDSETNGSTPLADSDTPNGTQQDETVDSQDSNAIAAVKQSQV) has biased composition (polar residues). Composition is skewed to basic and acidic residues over residues 1198–1210 (QEEHREKPGRDVL) and 1239–1254 (DGEKVKDGQCVKELEV). Position 1292 is a phosphoserine (Ser-1292). A compositionally biased stretch (basic and acidic residues) spans 1293-1331 (PEKREMGTDVEKEETETKTEQASEEHEQETAAPEHEGTH). A phosphoserine mark is found at Ser-1351, Ser-1355, and Ser-1357. The segment covering 1467-1492 (QRSDEDNKPDAGPDAAGKESAAREKI) has biased composition (basic and acidic residues). Residues 1501 to 1514 (ELESKSNKIVQSVI) are RII-binding. A phosphoserine mark is found at Ser-1546 and Ser-1645. Residues 1568-1684 (TLSAVAQEGL…QEPKGDLTES (117 aa)) form a disordered region. A compositionally biased stretch (basic and acidic residues) spans 1653-1684 (LTEEGDALKEEMNKAQTEEDDLQEPKGDLTES).

As to quaternary structure, binds to dimeric RII-alpha regulatory subunit of PKC. As to expression, isoform 1 is predominantly found in the nervous system. Isoform 3 is testis specific.

It localises to the cytoplasm. The protein localises to the cytoskeleton. The protein resides in the membrane. Functionally, anchoring protein that mediates the subcellular compartmentation of protein kinase A (PKA) and protein kinase C (PKC). The protein is A-kinase anchor protein 12 (Akap12) of Mus musculus (Mouse).